The following is a 42-amino-acid chain: Photosystem I reaction center subunit IX (42 aa).

The helical transmembrane segment at 7–27 threads the bilayer; it reads FLSLGPVLLVLWLSVQATLLI.

Belongs to the PsaJ family.

The protein resides in the cellular thylakoid membrane. Its function is as follows. May help in the organization of the PsaE and PsaF subunits. The chain is Photosystem I reaction center subunit IX from Gloeothece citriformis (strain PCC 7424) (Cyanothece sp. (strain PCC 7424)).